Here is a 230-residue protein sequence, read N- to C-terminus: Modulator of macroautophagy TMEM150B (230 aa).

A topological domain (cytoplasmic) is located at residue Met1. Residues 2 to 22 (WAWALLPICLTIWATAGIWIV) form a helical membrane-spanning segment. Topologically, residues 23–50 (YGMSVSNGSVNLTDGFPFISLCGTYPPQ) are extracellular. 2 N-linked (GlcNAc...) asparagine glycosylation sites follow: Asn29 and Asn33. Residues 51–71 (SCVFGQVLNVGAMLGVWISVI) form a helical membrane-spanning segment. Residues 72–83 (RFQQIRDYGCHS) are Cytoplasmic-facing. Residues 84 to 104 (VLNSVSLAMGLLCALGTSIVG) form a helical membrane-spanning segment. The Extracellular segment spans residues 105 to 115 (NFQQSNQLETH). The helical transmembrane segment at 116–136 (LAGAFLAFVIGNIYFWMQTVL) threads the bilayer. At 137–150 (TYMVKPKHGGCYIG) the chain is on the cytoplasmic side. A helical transmembrane segment spans residues 151-171 (PIRFCLSVACTALIVLMAVFL). Residues 172 to 183 (KLNMKSISAICE) lie on the Extracellular side of the membrane. A helical membrane pass occupies residues 184–204 (WIVAMILFLLYGLFSVDFWHL). The Cytoplasmic portion of the chain corresponds to 205–230 (DGHYFHVKKRTAIPNEVEVSTVTLNI).

Belongs to the DRAM/TMEM150 family.

It localises to the cell membrane. It is found in the endosome membrane. The protein resides in the cytoplasmic vesicle. The protein localises to the autophagosome membrane. In terms of biological role, modulator of macroautophagy that causes accumulation of autophagosomes under basal conditions and enhances autophagic flux. Represses cell death and promotes long-term clonogenic survival of cells grown in the absence of glucose in a macroautophagy-independent manner. May have some role in extracellular matrix engulfment or growth factor receptor recycling, both of which can modulate cell survival. This chain is Modulator of macroautophagy TMEM150B, found in Xenopus tropicalis (Western clawed frog).